The sequence spans 254 residues: Anamorsin homolog (254 aa).

Residues 4-133 are N-terminal SAM-like domain; that stretch reads VQENNHVLYL…EVGSKSKLSF (130 aa). Positions 134–165 are linker; the sequence is AKKSNVAAVWKLDDNEEEERIDDEELLDEDDK. Positions 176, 185, 188, and 190 each coordinate [2Fe-2S] cluster. Positions 176–190 are fe-S binding site A; the sequence is CGTTGKRKACKDCSC. Positions 215, 218, 226, and 229 each coordinate [4Fe-4S] cluster. 2 consecutive short sequence motifs (cx2C motif) follow at residues 215 to 218 and 226 to 229; these read CGSC and CATC. Residues 215–229 are fe-S binding site B; it reads CGSCYLGDAFRCATC.

It belongs to the anamorsin family. As to quaternary structure, monomer. [2Fe-2S] cluster serves as cofactor. [4Fe-4S] cluster is required as a cofactor.

The protein resides in the cytoplasm. Its subcellular location is the mitochondrion intermembrane space. Its function is as follows. Component of the cytosolic iron-sulfur (Fe-S) protein assembly (CIA) machinery. Required for the maturation of extramitochondrial Fe-S proteins. Part of an electron transfer chain functioning in an early step of cytosolic Fe-S biogenesis, facilitating the de novo assembly of a [4Fe-4S] cluster on the cytosolic Fe-S scaffold complex. Electrons are transferred from NADPH via a FAD- and FMN-containing diflavin oxidoreductase. Together with the diflavin oxidoreductase, also required for the assembly of the diferric tyrosyl radical cofactor of ribonucleotide reductase (RNR), probably by providing electrons for reduction during radical cofactor maturation in the catalytic small subunit. This Anopheles gambiae (African malaria mosquito) protein is Anamorsin homolog.